The primary structure comprises 301 residues: Diaminopimelate epimerase (301 aa).

N15, Q47, and N67 together coordinate substrate. The active-site Proton donor is C76. Substrate contacts are provided by residues 77–78, N163, N197, and 215–216; these read GN and ER. The active-site Proton acceptor is C224. 225-226 provides a ligand contact to substrate; sequence GS. A disordered region spans residues 280–301; it reads SGSLDPSTGLWSRDGTQEAGAR.

It belongs to the diaminopimelate epimerase family. In terms of assembly, homodimer.

It localises to the cytoplasm. The catalysed reaction is (2S,6S)-2,6-diaminopimelate = meso-2,6-diaminopimelate. The protein operates within amino-acid biosynthesis; L-lysine biosynthesis via DAP pathway; DL-2,6-diaminopimelate from LL-2,6-diaminopimelate: step 1/1. Functionally, catalyzes the stereoinversion of LL-2,6-diaminopimelate (L,L-DAP) to meso-diaminopimelate (meso-DAP), a precursor of L-lysine and an essential component of the bacterial peptidoglycan. In Rhizobium leguminosarum bv. trifolii (strain WSM2304), this protein is Diaminopimelate epimerase.